Reading from the N-terminus, the 694-residue chain is Elongation factor G (694 aa).

The tr-type G domain maps to 8 to 287 (EDYRNFGIMA…AVVEFLPAPT (280 aa)). Residues 17–24 (AHIDAGKT), 86–90 (DTPGH), and 140–143 (NKMD) contribute to the GTP site.

Belongs to the TRAFAC class translation factor GTPase superfamily. Classic translation factor GTPase family. EF-G/EF-2 subfamily.

The protein localises to the cytoplasm. Catalyzes the GTP-dependent ribosomal translocation step during translation elongation. During this step, the ribosome changes from the pre-translocational (PRE) to the post-translocational (POST) state as the newly formed A-site-bound peptidyl-tRNA and P-site-bound deacylated tRNA move to the P and E sites, respectively. Catalyzes the coordinated movement of the two tRNA molecules, the mRNA and conformational changes in the ribosome. This chain is Elongation factor G, found in Brucella anthropi (strain ATCC 49188 / DSM 6882 / CCUG 24695 / JCM 21032 / LMG 3331 / NBRC 15819 / NCTC 12168 / Alc 37) (Ochrobactrum anthropi).